The chain runs to 226 residues: Ribose-5-phosphate isomerase A (226 aa).

Substrate contacts are provided by residues 28–31 (TGST), 84–87 (DGAD), and 97–100 (KGLG). The active-site Proton acceptor is glutamate 106. Lysine 124 serves as a coordination point for substrate.

The protein belongs to the ribose 5-phosphate isomerase family. In terms of assembly, homodimer.

The catalysed reaction is aldehydo-D-ribose 5-phosphate = D-ribulose 5-phosphate. It functions in the pathway carbohydrate degradation; pentose phosphate pathway; D-ribose 5-phosphate from D-ribulose 5-phosphate (non-oxidative stage): step 1/1. Its function is as follows. Catalyzes the reversible conversion of ribose-5-phosphate to ribulose 5-phosphate. The chain is Ribose-5-phosphate isomerase A from Deinococcus radiodurans (strain ATCC 13939 / DSM 20539 / JCM 16871 / CCUG 27074 / LMG 4051 / NBRC 15346 / NCIMB 9279 / VKM B-1422 / R1).